Here is a 287-residue protein sequence, read N- to C-terminus: MSLVSMKEMLNEALRGKYAVGQFNINNLEWTQAILAAAEEEKSPVILGVSEGAARYMGGFKTVVNMVKGLMEDMNITVPVAIHLDHGSSFEKCKAAIDAGFTSVMIDASHHPFEENVRITSQVVEYAHARGVSVEAELGIVGGQEDDVVGEGVIYADPKECEELVKRTGIDCLAPALGSVHGPYKGEPKLGFAEMEKIRDLTGIPLVLHGGTGIPTEQIQRAISLGTSKINVNTENQIAFTKAVRELLAKDPNVYDPRKIIGPGRDAIKATVIGKMREFGSSGKAAQ.

Ser50 provides a ligand contact to D-glyceraldehyde 3-phosphate. Asp85 functions as the Proton donor in the catalytic mechanism. 4 residues coordinate Zn(2+): His86, Asp107, Glu137, and His181. Gly182 serves as a coordination point for dihydroxyacetone phosphate. His209 is a Zn(2+) binding site. Residues 210–212 and 231–234 contribute to the dihydroxyacetone phosphate site; these read GGT and NVNT. A phosphothreonine mark is found at Thr212 and Thr234.

The protein belongs to the class II fructose-bisphosphate aldolase family. Zn(2+) serves as cofactor.

The enzyme catalyses beta-D-fructose 1,6-bisphosphate = D-glyceraldehyde 3-phosphate + dihydroxyacetone phosphate. It functions in the pathway carbohydrate degradation; glycolysis; D-glyceraldehyde 3-phosphate and glycerone phosphate from D-glucose: step 4/4. Functionally, catalyzes the aldol condensation of dihydroxyacetone phosphate (DHAP or glycerone-phosphate) with glyceraldehyde 3-phosphate (G3P) to form fructose 1,6-bisphosphate (FBP) in gluconeogenesis and the reverse reaction in glycolysis. This is Fructose-bisphosphate aldolase (fba) from Geobacillus stearothermophilus (Bacillus stearothermophilus).